The sequence spans 405 residues: Acetate kinase (405 aa).

N10 is a binding site for Mg(2+). K17 lines the ATP pocket. Substrate is bound at residue R93. D150 acts as the Proton donor/acceptor in catalysis. Residues 210–214 (HLGNG), 284–286 (DMR), and 332–336 (GVGEN) contribute to the ATP site. Mg(2+) is bound at residue E386.

It belongs to the acetokinase family. In terms of assembly, homodimer. Mg(2+) serves as cofactor. Mn(2+) is required as a cofactor.

It localises to the cytoplasm. The enzyme catalyses acetate + ATP = acetyl phosphate + ADP. It functions in the pathway metabolic intermediate biosynthesis; acetyl-CoA biosynthesis; acetyl-CoA from acetate: step 1/2. Catalyzes the formation of acetyl phosphate from acetate and ATP. Can also catalyze the reverse reaction. The polypeptide is Acetate kinase (Streptomyces avermitilis (strain ATCC 31267 / DSM 46492 / JCM 5070 / NBRC 14893 / NCIMB 12804 / NRRL 8165 / MA-4680)).